Here is a 561-residue protein sequence, read N- to C-terminus: Urocanate hydratase (561 aa).

Residues 52–53 (GG), glutamine 130, 176–178 (GMG), glutamate 196, arginine 201, 242–243 (NA), 263–267 (QTSAH), 273–274 (YL), and tyrosine 322 contribute to the NAD(+) site. The active site involves cysteine 410. Position 492 (glycine 492) interacts with NAD(+).

The protein belongs to the urocanase family. Requires NAD(+) as cofactor.

It localises to the cytoplasm. The catalysed reaction is 4-imidazolone-5-propanoate = trans-urocanate + H2O. It participates in amino-acid degradation; L-histidine degradation into L-glutamate; N-formimidoyl-L-glutamate from L-histidine: step 2/3. Functionally, catalyzes the conversion of urocanate to 4-imidazolone-5-propionate. In Salmonella newport (strain SL254), this protein is Urocanate hydratase.